The sequence spans 311 residues: UDP-N-acetylenolpyruvoylglucosamine reductase (311 aa).

The 163-residue stretch at 29–191 (IGGKADIVLK…LSARLKLKPI (163 aa)) folds into the FAD-binding PCMH-type domain. Residue R172 is part of the active site. The active-site Proton donor is the S223. E299 is an active-site residue.

It belongs to the MurB family. The cofactor is FAD.

The protein resides in the cytoplasm. It carries out the reaction UDP-N-acetyl-alpha-D-muramate + NADP(+) = UDP-N-acetyl-3-O-(1-carboxyvinyl)-alpha-D-glucosamine + NADPH + H(+). It participates in cell wall biogenesis; peptidoglycan biosynthesis. Functionally, cell wall formation. This chain is UDP-N-acetylenolpyruvoylglucosamine reductase, found in Chloroherpeton thalassium (strain ATCC 35110 / GB-78).